Reading from the N-terminus, the 284-residue chain is Bifunctional protein FolD (284 aa).

Residues 164-166 (GRS) and Ser-189 contribute to the NADP(+) site.

The protein belongs to the tetrahydrofolate dehydrogenase/cyclohydrolase family. Homodimer.

It catalyses the reaction (6R)-5,10-methylene-5,6,7,8-tetrahydrofolate + NADP(+) = (6R)-5,10-methenyltetrahydrofolate + NADPH. The catalysed reaction is (6R)-5,10-methenyltetrahydrofolate + H2O = (6R)-10-formyltetrahydrofolate + H(+). The protein operates within one-carbon metabolism; tetrahydrofolate interconversion. Catalyzes the oxidation of 5,10-methylenetetrahydrofolate to 5,10-methenyltetrahydrofolate and then the hydrolysis of 5,10-methenyltetrahydrofolate to 10-formyltetrahydrofolate. The polypeptide is Bifunctional protein FolD (Listeria monocytogenes serotype 4b (strain F2365)).